A 290-amino-acid polypeptide reads, in one-letter code: 4-hydroxy-tetrahydrodipicolinate synthase (290 aa).

Thr48 serves as a coordination point for pyruvate. Residue Tyr137 is the Proton donor/acceptor of the active site. Lys165 serves as the catalytic Schiff-base intermediate with substrate. Ile206 lines the pyruvate pocket.

Belongs to the DapA family. In terms of assembly, homotetramer; dimer of dimers.

It localises to the cytoplasm. The catalysed reaction is L-aspartate 4-semialdehyde + pyruvate = (2S,4S)-4-hydroxy-2,3,4,5-tetrahydrodipicolinate + H2O + H(+). It participates in amino-acid biosynthesis; L-lysine biosynthesis via DAP pathway; (S)-tetrahydrodipicolinate from L-aspartate: step 3/4. Its function is as follows. Catalyzes the condensation of (S)-aspartate-beta-semialdehyde [(S)-ASA] and pyruvate to 4-hydroxy-tetrahydrodipicolinate (HTPA). This is 4-hydroxy-tetrahydrodipicolinate synthase from Ligilactobacillus salivarius (strain UCC118) (Lactobacillus salivarius).